The chain runs to 920 residues: Isoleucine--tRNA ligase (920 aa).

Residues 58 to 68 (PYANGHLHLGH) carry the 'HIGH' region motif. Residue E569 participates in L-isoleucyl-5'-AMP binding. Residues 610–614 (KMSKS) carry the 'KMSKS' region motif. Position 613 (K613) interacts with ATP. Zn(2+) is bound by residues C895, C898, C910, and C913.

This sequence belongs to the class-I aminoacyl-tRNA synthetase family. IleS type 1 subfamily. As to quaternary structure, monomer. Requires Zn(2+) as cofactor.

It localises to the cytoplasm. The catalysed reaction is tRNA(Ile) + L-isoleucine + ATP = L-isoleucyl-tRNA(Ile) + AMP + diphosphate. In terms of biological role, catalyzes the attachment of isoleucine to tRNA(Ile). As IleRS can inadvertently accommodate and process structurally similar amino acids such as valine, to avoid such errors it has two additional distinct tRNA(Ile)-dependent editing activities. One activity is designated as 'pretransfer' editing and involves the hydrolysis of activated Val-AMP. The other activity is designated 'posttransfer' editing and involves deacylation of mischarged Val-tRNA(Ile). This Helicobacter pylori (strain Shi470) protein is Isoleucine--tRNA ligase.